A 731-amino-acid chain; its full sequence is 1,4-alpha-glucan branching enzyme GlgB (731 aa).

A disulfide bond links cysteine 193 and cysteine 617. Residue aspartate 411 is the Nucleophile of the active site. Glutamate 464 functions as the Proton donor in the catalytic mechanism.

The protein belongs to the glycosyl hydrolase 13 family. GlgB subfamily. As to quaternary structure, monomer.

The catalysed reaction is Transfers a segment of a (1-&gt;4)-alpha-D-glucan chain to a primary hydroxy group in a similar glucan chain.. Its pathway is glycan biosynthesis; glycogen biosynthesis. It participates in capsule biogenesis; capsule polysaccharide biosynthesis. Its function is as follows. Essential enzyme that catalyzes the formation of the alpha-1,6-glucosidic linkages in glucan chains by scission of a 1,4-alpha-linked oligosaccharide from growing alpha-1,4-glucan chains and the subsequent attachment of the oligosaccharide to the alpha-1,6 position. Is involved in the biosynthesis of both glycogen and capsular alpha-D-glucan. The protein is 1,4-alpha-glucan branching enzyme GlgB (glgB) of Mycobacterium tuberculosis (strain CDC 1551 / Oshkosh).